The sequence spans 432 residues: Trigger factor (432 aa).

One can recognise a PPIase FKBP-type domain in the interval 161-246; sequence EDRVTIDFTG…LKKVEERELP (86 aa).

The protein belongs to the FKBP-type PPIase family. Tig subfamily.

It localises to the cytoplasm. The enzyme catalyses [protein]-peptidylproline (omega=180) = [protein]-peptidylproline (omega=0). Functionally, involved in protein export. Acts as a chaperone by maintaining the newly synthesized protein in an open conformation. Functions as a peptidyl-prolyl cis-trans isomerase. The polypeptide is Trigger factor (Salmonella typhi).